The following is a 231-amino-acid chain: Orotate phosphoribosyltransferase (231 aa).

Residues Lys-27, 79–80 (YK), Arg-106, Lys-107, Lys-110, His-112, and 133–141 (DDVMTAGTA) each bind 5-phospho-alpha-D-ribose 1-diphosphate. Orotate contacts are provided by Thr-137 and Arg-166.

This sequence belongs to the purine/pyrimidine phosphoribosyltransferase family. PyrE subfamily. In terms of assembly, homodimer. It depends on Mg(2+) as a cofactor.

It carries out the reaction orotidine 5'-phosphate + diphosphate = orotate + 5-phospho-alpha-D-ribose 1-diphosphate. It participates in pyrimidine metabolism; UMP biosynthesis via de novo pathway; UMP from orotate: step 1/2. Catalyzes the transfer of a ribosyl phosphate group from 5-phosphoribose 1-diphosphate to orotate, leading to the formation of orotidine monophosphate (OMP). The protein is Orotate phosphoribosyltransferase of Bifidobacterium adolescentis (strain ATCC 15703 / DSM 20083 / NCTC 11814 / E194a).